Consider the following 196-residue polypeptide: Peptidyl-tRNA hydrolase (196 aa).

Tyr-18 is a tRNA binding site. The Proton acceptor role is filled by His-23. Positions 69, 71, and 117 each coordinate tRNA.

This sequence belongs to the PTH family. Monomer.

The protein localises to the cytoplasm. The enzyme catalyses an N-acyl-L-alpha-aminoacyl-tRNA + H2O = an N-acyl-L-amino acid + a tRNA + H(+). Functionally, hydrolyzes ribosome-free peptidyl-tRNAs (with 1 or more amino acids incorporated), which drop off the ribosome during protein synthesis, or as a result of ribosome stalling. In terms of biological role, catalyzes the release of premature peptidyl moieties from peptidyl-tRNA molecules trapped in stalled 50S ribosomal subunits, and thus maintains levels of free tRNAs and 50S ribosomes. This Vibrio campbellii (strain ATCC BAA-1116) protein is Peptidyl-tRNA hydrolase.